The primary structure comprises 418 residues: Serpin H1 (418 aa).

The signal sequence occupies residues Met-1–Ala-18. Lys-94 is subject to N6-succinyllysine. Asn-120 and Asn-125 each carry an N-linked (GlcNAc...) asparagine glycan. Ser-141 bears the Phosphoserine mark. Position 207 is an N6-acetyllysine (Lys-207). Position 296 is an N6-succinyllysine (Lys-296). Lys-319 carries the post-translational modification N6-acetyllysine. A Prevents secretion from ER motif is present at residues Arg-415–Leu-418.

The protein belongs to the serpin family.

The protein resides in the endoplasmic reticulum lumen. Its function is as follows. Binds specifically to collagen. Could be involved as a chaperone in the biosynthetic pathway of collagen. The chain is Serpin H1 (SERPINH1) from Bos taurus (Bovine).